We begin with the raw amino-acid sequence, 281 residues long: MKATTFTLLLSIATAINAAAFEDSRLKALFARDAEISFGATLSAEISHGFGHHHGHTADLSSEIGGGSSSSSVSESTVEELSTTTTTESVSASVSASVSASVSASVSVSSSAEETSTEATESAETTDSFETTDSAETTDIVETTDSVDTNTTDISTTDETTEETTDATDSVETTFESVSNTEDLSSSSSSIITDSSESTIEETPLITDTSVPSSLSEEYSTSGSSSEWIHTTTAATSHNSSNSNSNHSNVSNTTTSANFAIQYGTDYGVAVVAAIVGALLI.

Residues M1–A18 form the signal peptide. Disordered stretches follow at residues H52–V94 and V106–E227. Low complexity-rich tracts occupy residues S69–V94, V106–D158, A167–T203, and S210–E227. N-linked (GlcNAc...) asparagine glycosylation occurs at N150. N239, N246, N249, and N252 each carry an N-linked (GlcNAc...) asparagine glycan. S256 carries GPI-anchor amidated serine lipidation. Positions A257–I281 are cleaved as a propeptide — removed in mature form.

It is found in the cell membrane. This chain is Predicted GPI-anchored protein 39 (PGA39), found in Candida albicans (strain SC5314 / ATCC MYA-2876) (Yeast).